Consider the following 396-residue polypeptide: L-lactate dehydrogenase (396 aa).

Residues 1-380 (MIISAASDYR…SGDSLVQELG (380 aa)) form the FMN hydroxy acid dehydrogenase domain. A substrate-binding site is contributed by tyrosine 24. FMN-binding residues include serine 106 and glutamine 127. A substrate-binding site is contributed by tyrosine 129. Threonine 155 contacts FMN. Position 164 (arginine 164) interacts with substrate. Residue lysine 251 coordinates FMN. The active-site Proton acceptor is histidine 275. Arginine 278 contacts substrate. Residue 306–330 (DSGIRNGLDVVRMIALGADTVLLGR) participates in FMN binding.

The protein belongs to the FMN-dependent alpha-hydroxy acid dehydrogenase family. FMN serves as cofactor.

It is found in the cell inner membrane. It carries out the reaction (S)-lactate + A = pyruvate + AH2. Functionally, catalyzes the conversion of L-lactate to pyruvate. Is coupled to the respiratory chain. The sequence is that of L-lactate dehydrogenase from Salmonella newport (strain SL254).